The chain runs to 268 residues: Undecaprenyl-diphosphatase (268 aa).

7 helical membrane passes run 47-67, 83-103, 109-129, 144-164, 184-204, 217-237, and 248-268; these read FAVLIQLGAILAILALYFVKL, FVIGVLVAFLPAAVIGAAFGG, LFNPWVVCFSLIVGGAILLWV, FPLLTYFYIGCAQCTAMIPGV, AAEFSFFLAIPTMLGAFVYDL, IIVAIGFVVSFITAIIVVKTF, and LFAWWRVIVGTLGLIALALGL.

The protein belongs to the UppP family.

Its subcellular location is the cell inner membrane. It catalyses the reaction di-trans,octa-cis-undecaprenyl diphosphate + H2O = di-trans,octa-cis-undecaprenyl phosphate + phosphate + H(+). In terms of biological role, catalyzes the dephosphorylation of undecaprenyl diphosphate (UPP). Confers resistance to bacitracin. The chain is Undecaprenyl-diphosphatase from Rhodopseudomonas palustris (strain ATCC BAA-98 / CGA009).